Reading from the N-terminus, the 385-residue chain is MNPVPAQREYFLDSIRAWLMLLGIPFHISLIYSSHTWHVNSAEPSLWLTLFNDFIHSFRMQVFFVISGYFSYMLFLRYPLKKWWKVRVERVGIPMLTAIPLLTLPQFIMLQYVKGKAESWPRLSLYDKYNTLAWELISHLWFLLVLVVMTTLCVWIFKRIRNNLENSDKTNKKFSMVKLSVIFLCLGIGYAVIRRTIFIVYPPILSNGMFNFIVMQTLFYLPFFILGALAFIFPHLKALFTTPSRGCTLAAALAFVAYLLNQRYGSGDAWMYETESVITMVLGLWMVNVVFSFGHRLLNFQSARVTYFVNASLFIYLVHHPLTLFFGAYITPHITSNWLGFLCGLIFVVGIAIILYEIHLRIPLLKFLFSGKPVVKRENDKAPAR.

10 helical membrane-spanning segments follow: residues 17–37 (AWLMLLGIPFHISLIYSSHTW), 60–80 (MQVFFVISGYFSYMLFLRYPL), 91–111 (VGIPMLTAIPLLTLPQFIMLQ), 137–157 (ISHLWFLLVLVVMTTLCVWIF), 173–193 (KFSMVKLSVIFLCLGIGYAVI), 212–232 (FIVMQTLFYLPFFILGALAFI), 239–259 (LFTTPSRGCTLAAALAFVAYL), 274–294 (TESVITMVLGLWMVNVVFSFG), 311–331 (ASLFIYLVHHPLTLFFGAYIT), and 338–358 (WLGFLCGLIFVVGIAIILYEI).

The protein belongs to the acyltransferase 3 family. OpgC subfamily.

The protein resides in the cell membrane. It participates in glycan metabolism; osmoregulated periplasmic glucan (OPG) biosynthesis. Functionally, necessary for the succinyl substitution of periplasmic glucans. Could catalyze the transfer of succinyl residues from the cytoplasmic side of the membrane to the nascent glucan backbones on the periplasmic side of the membrane. The chain is Glucans biosynthesis protein C from Escherichia coli O6:K15:H31 (strain 536 / UPEC).